The chain runs to 116 residues: MKIRKSILAGTLAIVLASPLVTNLDKNEAQASTSLPTSNEYQNEKLANELKSLLDELNVNELATGSLNTYYKRTIKISGQKAMYALKSKDFKKMSEAKYQLQKIYNEIDEALKSKY.

A signal peptide spans 1 to 31 (MKIRKSILAGTLAIVLASPLVTNLDKNEAQA). The segment at 62 to 79 (LATGSLNTYYKRTIKISG) is essential for activity.

Belongs to the SCIN family.

The protein resides in the secreted. In terms of biological role, involved in countering the first line of host defense mechanisms. Efficiently inhibits opsonization, phagocytosis and killing of S.aureus by human neutrophils. Acts by binding and stabilizing human C3 convertases (C4b2a and C3bBb), leading to their inactivation. The convertases are no longer able to cleave complement C3, therefore preventing further C3b deposition on the bacterial surface and phagocytosis of the bacterium. Also prevents C5a-induced neutrophil responses. This Staphylococcus aureus (strain Mu50 / ATCC 700699) protein is Staphylococcal complement inhibitor (scn).